We begin with the raw amino-acid sequence, 532 residues long: Neutral amino acid transporter A (532 aa).

Met1 carries the post-translational modification N-acetylmethionine. Positions 1–10 (MEKSNETNGY) are enriched in polar residues. A disordered region spans residues 1 to 25 (MEKSNETNGYLDSAQAGPAAGPGAP). Residues 1–41 (MEKSNETNGYLDSAQAGPAAGPGAPGTAAGRARRCAGFLRR) lie on the Cytoplasmic side of the membrane. The segment covering 14–25 (AQAGPAAGPGAP) has biased composition (low complexity). 3 helical membrane passes run 42–62 (QALVLLTVSGVLAGAGLGAAL), 88–108 (MIILPLVVCSLVSGAASLDAS), and 119–139 (AYFGLTTLSASALAVALAFII). Residues 140-216 (KPGSGAQTLQ…VTHEKIPIGT (77 aa)) are Extracellular-facing. N-linked (GlcNAc...) asparagine glycans are attached at residues Asn201 and Asn206. The next 6 helical transmembrane spans lie at 217–237 (EIEGMNILGLVLFALVLGVAL), 257–277 (ATMVLVSWIMWYVPVGIMFLV), 298–318 (IFASILGHVIHGGIVLPLIYF), 328–348 (FLLGLLAPFATAFATCSSSAT), 373–393 (IGATVNMDGAAIFQCVAAVFI), and 418–438 (VGAAGVPAGGVLTIAIILEAI). Positions 500 to 532 (CKSEEETSPLVTHQNPAGPVASAPELESKESVL) are disordered. A phosphoserine mark is found at Ser507, Ser527, and Ser530.

The protein belongs to the dicarboxylate/amino acid:cation symporter (DAACS) (TC 2.A.23) family. SLC1A4 subfamily. As to expression, expressed mostly in brain, muscle, and pancreas but detected in all tissues examined.

The protein localises to the membrane. It localises to the melanosome. The catalysed reaction is L-threonine(in) + Na(+)(in) = L-threonine(out) + Na(+)(out). It carries out the reaction L-serine(in) + Na(+)(in) = L-serine(out) + Na(+)(out). It catalyses the reaction L-cysteine(in) + Na(+)(in) = L-cysteine(out) + Na(+)(out). The enzyme catalyses L-alanine(in) + Na(+)(in) = L-alanine(out) + Na(+)(out). The catalysed reaction is L-proline(in) + Na(+)(in) = L-proline(out) + Na(+)(out). It carries out the reaction 4-hydroxy-L-proline(in) + Na(+)(in) = 4-hydroxy-L-proline(out) + Na(+)(out). Its function is as follows. Sodium-dependent neutral amino-acid transporter that mediates transport of alanine, serine, cysteine, proline, hydroxyproline and threonine. The chain is Neutral amino acid transporter A from Homo sapiens (Human).